The sequence spans 183 residues: Dual-action ribosomal maturation protein DarP (183 aa).

A disordered region spans residues 1–20; sequence MKQKYEDWLNDVPDNQEDDE.

The protein belongs to the DarP family.

It localises to the cytoplasm. Its function is as follows. Member of a network of 50S ribosomal subunit biogenesis factors which assembles along the 30S-50S interface, preventing incorrect 23S rRNA structures from forming. Promotes peptidyl transferase center (PTC) maturation. This is Dual-action ribosomal maturation protein DarP from Pectobacterium carotovorum subsp. carotovorum (strain PC1).